The following is a 302-amino-acid chain: NAD kinase 2 (302 aa).

D78 (proton acceptor) is an active-site residue. NAD(+)-binding positions include 78 to 79, 152 to 153, D182, and 193 to 198; these read DG, NE, and TAYSLS.

The protein belongs to the NAD kinase family. A divalent metal cation is required as a cofactor.

The protein localises to the cytoplasm. It catalyses the reaction NAD(+) + ATP = ADP + NADP(+) + H(+). Functionally, involved in the regulation of the intracellular balance of NAD and NADP, and is a key enzyme in the biosynthesis of NADP. Catalyzes specifically the phosphorylation on 2'-hydroxyl of the adenosine moiety of NAD to yield NADP. In Prochlorococcus marinus (strain NATL2A), this protein is NAD kinase 2.